A 1182-amino-acid chain; its full sequence is NACHT, LRR and PYD domains-containing protein 1a (1182 aa).

A disordered region spans residues 1 to 23 (MEESQSKQESSTKVAQHEGQEDV). The 310-residue stretch at 133–442 (QLVIIEGAAG…EFFAAMSYIL (310 aa)) folds into the NACHT domain. Residue 139–146 (GAAGIGKS) participates in ATP binding. LRR repeat units follow at residues 634–655 (NLEELDLSGNPLSYYAVHSLCT), 691–711 (SLTELDLQLNDLGDGGVKMLC), and 720–743 (NLSILWLDQASLSDQVIAELRTLE). Positions 780 to 806 (QQRQQSGDKHMEPLGTEDEFWGPTGPV) are disordered. The ZU5 stretch occupies residues 799–932 (FWGPTGPVTT…HYAVLENPSF (134 aa)). The FIIND domain maps to 799–1082 (FWGPTGPVTT…LRPALPKIAT (284 aa)). Residues 933 to 1082 (SPMGILLRMI…LRPALPKIAT (150 aa)) are UPA. Residues 1092-1175 (HFMDQHREQL…HLVMDILEKL (84 aa)) enclose the CARD domain.

Belongs to the NLRP family. Interacts (via LRR repeats) with BCL2 and BCL2L1 (via the loop between motifs BH4 and BH3). Interacts with NOD2; this interaction is enhanced in the presence of muramyl dipeptide (MDP) and increases IL1B release. Interacts with EIF2AK2/PKR; this interaction requires EIF2AK2 activity, is accompanied by EIF2AK2 autophosphorylation and promotes inflammasome assembly in response to danger-associated signals. Interacts with MEFV; this interaction targets Nlrp1a to degradation by autophagy, hence preventing excessive IL1B- and IL18-mediated inflammation. Interacts with DPP9; leading to inhibit activation of the inflammasome. DPP9 acts via formation of a ternary complex, composed of a DPP9 homodimer, one full-length Nlrp1a protein, and one cleaved C-terminus of Nlrp1a (NACHT, LRR and PYD domains-containing protein 1a, C-terminus). Interacts with DPP8; leading to inhibit activation of the inflammasome, probably via formation of a ternary complex with DPP8. As to quaternary structure, interacts with the C-terminal part of Nlrp1a (NACHT, LRR and PYD domains-containing protein 1a, C-terminus) in absence of pathogens and other damage-associated signals. In terms of assembly, interacts with the N-terminal part of Nlrp1a (NACHT, LRR and PYD domains-containing protein 1a, N-terminus) in absence of pathogens and other damage-associated signals. Homomultimer; forms the Nlrp1a inflammasome polymeric complex, a filament composed of homopolymers of this form in response to pathogens and other damage-associated signals. Interacts (via CARD domain) with CASP1 (via CARD domain); leading to CASP1 activation. Post-translationally, autocatalytically cleaved. Autocatalytic cleavage in FIIND region occurs constitutively, prior to activation signals, and is required for inflammasome activity (IL1B release), possibly by facilitating CASP1 binding. Both N- and C-terminal parts remain associated non-covalently. Ubiquitinated in response to pathogen-associated signals, leading to its degradation by the proteasome and subsequent release of the cleaved C-terminal part of the protein (NACHT, LRR and PYD domains-containing protein 1a, C-terminus), which polymerizes and forms the Nlrp1a inflammasome. In terms of tissue distribution, highly expressed in hematopoietic stem cells and progenitor cells of both myeloid and lymphoid origin. The expression is highly strain-dependent. Not expressed in Balb/cJ animals, but widely expressed in C57BL/6J. Expressed in macrophages resistant to Bacillus anthracis lethal toxin, but not in toxin-sensitive macrophages, except in CAST/EiJ strain.

Its subcellular location is the cytoplasm. The protein localises to the cytosol. The protein resides in the nucleus. It is found in the inflammasome. With respect to regulation, nlrp1a inflammasome is activated by pathogens and other damage-associated signals: activation promotes ubiquitination and degradation of the N-terminal part, releasing the cleaved C-terminal part of the protein (NACHT, LRR and PYD domains-containing protein 1a, C-terminus), which polymerizes and forms the Nlrp1a inflammasome. Nlrp1a inflammasome is inhibited by DPP8 and DPP9, which sequester the C-terminal fragment of Nlrp1a (NACHT, LRR and PYD domains-containing protein 1a, C-terminus) in a ternary complex, thereby preventing Nlrp1a oligomerization and activation. Nlrp1a inflammasome is activated by Val-boroPro (Talabostat, PT-100), an inhibitor of dipeptidyl peptidases DPP8 and DPP9. Val-boroPro relieves inhibition of DPP8 and/or DPP9 by promoting disruption of the ternary complex, releasing its C-terminal part from autoinhibition. In terms of biological role, acts as the sensor component of the Nlrp1a inflammasome, which mediates inflammasome activation in response to various pathogen-associated signals, leading to subsequent pyroptosis. Inflammasomes are supramolecular complexes that assemble in the cytosol in response to pathogens and other damage-associated signals and play critical roles in innate immunity and inflammation. Acts as a recognition receptor (PRR): recognizes specific pathogens and other damage-associated signals, and mediates the formation of the inflammasome polymeric complex. In response to pathogen-associated signals, the N-terminal part of Nlrp1a is degraded by the proteasome, releasing the cleaved C-terminal part of the protein (NACHT, LRR and PYD domains-containing protein 1a, C-terminus), which polymerizes to initiate the formation of the inflammasome complex: the inflammasome recruits pro-caspase-1 (proCASP1) and promotes caspase-1 (CASP1) activation, which subsequently cleaves and activates inflammatory cytokines IL1B and IL18 and gasdermin-D (GSDMD), leading to pyroptosis. In the absence of GSDMD expression, the Nlrp1a inflammasome is able to recruit and activate CASP8, leading to activation of gasdermin-E (GSDME). Activation of Nlrp1a inflammasome is also required for HMGB1 secretion; the active cytokines and HMGB1 stimulate inflammatory responses. When activated in the bone marrow, induces the pyroptosis of hematopoietic stem cells and progenitor cells of both myeloid and lymphoid lineages, hence allowing the removal of damaged cells, and the release of IL1B, which induces granulopoiesis. Functionally, constitutes the precursor of the Nlrp1a inflammasome, which mediates autoproteolytic processing within the FIIND domain to generate the N-terminal and C-terminal parts, which are associated non-covalently in absence of pathogens and other damage-associated signals. Regulatory part that prevents formation of the Nlrp1a inflammasome: in absence of pathogens and other damage-associated signals, interacts with the C-terminal part of Nlrp1a (NACHT, LRR and PYD domains-containing protein 1a, C-terminus), preventing activation of the Nlrp1a inflammasome. In response to pathogen-associated signals, this part is ubiquitinated and degraded by the proteasome, releasing the cleaved C-terminal part of the protein, which polymerizes and forms the Nlrp1a inflammasome. Its function is as follows. Constitutes the active part of the Nlrp1a inflammasome. In absence of pathogens and other damage-associated signals, interacts with the N-terminal part of Nlrp1a (NACHT, LRR and PYD domains-containing protein 1a, N-terminus), preventing activation of the Nlrp1a inflammasome. In response to pathogen-associated signals, the N-terminal part of Nlrp1a is degraded by the proteasome, releasing this form, which polymerizes to form the Nlrp1a inflammasome complex: the Nlrp1a inflammasome complex then directly recruits pro-caspase-1 (proCASP1) and promotes caspase-1 (CASP1) activation, leading to gasdermin-D (GSDMD) cleavage and subsequent pyroptosis. The chain is NACHT, LRR and PYD domains-containing protein 1a from Mus musculus (Mouse).